Here is a 475-residue protein sequence, read N- to C-terminus: Cytosolic enolase 3 (475 aa).

Residue S2 is modified to N-acetylserine. Substrate contacts are provided by H200 and E209. D252 functions as the Proton donor in the catalytic mechanism. Mg(2+) is bound by residues D287, E336, and D361. The substrate site is built by E336 and D361. Residue K386 is the Proton acceptor of the active site. Substrate contacts are provided by residues 413–416 (SHRC) and K437.

It belongs to the enolase family. In terms of assembly, homodimer. Requires Mg(2+) as cofactor.

It is found in the cytoplasm. Its subcellular location is the nucleus. The catalysed reaction is (2R)-2-phosphoglycerate = phosphoenolpyruvate + H2O. The protein operates within carbohydrate degradation; glycolysis; pyruvate from D-glyceraldehyde 3-phosphate: step 4/5. The protein is Cytosolic enolase 3 (ENO3) of Arabidopsis thaliana (Mouse-ear cress).